The sequence spans 285 residues: N(G),N(G)-dimethylarginine dimethylaminohydrolase 1 (285 aa).

An N-acetylalanine modification is found at Ala-2. A substrate-binding site is contributed by Leu-30. Ser-33 carries the post-translational modification Phosphoserine. Substrate contacts are provided by Asp-73, Glu-78, Asp-79, Arg-98, and Arg-145. His-173 (proton donor) is an active-site residue. Position 222 is an S-nitrosocysteine (Cys-222). Substrate is bound at residue Val-268. Cys-274 carries the S-nitrosocysteine modification. Residue Cys-274 is the Nucleophile of the active site. Cys-274 lines the Zn(2+) pocket.

The protein belongs to the DDAH family. Monomer. As to expression, detected in red blood cells (at protein level). Widely distributed, high amounts found in kidney, brain, aorta and pancreas.

It catalyses the reaction N(omega),N(omega)-dimethyl-L-arginine + H2O = dimethylamine + L-citrulline. The catalysed reaction is N(omega)-methyl-L-arginine + H2O = L-citrulline + methylamine. With respect to regulation, inhibited by zinc ions. Its function is as follows. Hydrolyzes N(G),N(G)-dimethyl-L-arginine (ADMA) and N(G)-monomethyl-L-arginine (MMA) which act as inhibitors of NOS. Has therefore a role in the regulation of nitric oxide generation. The polypeptide is N(G),N(G)-dimethylarginine dimethylaminohydrolase 1 (Ddah1) (Rattus norvegicus (Rat)).